The chain runs to 637 residues: Biosynthetic arginine decarboxylase (637 aa).

An N6-(pyridoxal phosphate)lysine modification is found at lysine 101. Phenylalanine 286–tyrosine 296 contacts substrate.

It belongs to the Orn/Lys/Arg decarboxylase class-II family. SpeA subfamily. It depends on Mg(2+) as a cofactor. Requires pyridoxal 5'-phosphate as cofactor.

The enzyme catalyses L-arginine + H(+) = agmatine + CO2. It participates in amine and polyamine biosynthesis; agmatine biosynthesis; agmatine from L-arginine: step 1/1. Catalyzes the biosynthesis of agmatine from arginine. This is Biosynthetic arginine decarboxylase from Shewanella halifaxensis (strain HAW-EB4).